An 86-amino-acid polypeptide reads, in one-letter code: Cell division topological specificity factor (86 aa).

Belongs to the MinE family.

Functionally, prevents the cell division inhibition by proteins MinC and MinD at internal division sites while permitting inhibition at polar sites. This ensures cell division at the proper site by restricting the formation of a division septum at the midpoint of the long axis of the cell. The sequence is that of Cell division topological specificity factor from Alteromonas mediterranea (strain DSM 17117 / CIP 110805 / LMG 28347 / Deep ecotype).